The sequence spans 308 residues: Polyketide transferase claH (308 aa).

The interval 50–280 (SDIAVYFSQQ…RVEVAAGKSH (231 aa)) is abhydrolase domain.

Belongs to the polyketide transferase af380 family.

The protein operates within secondary metabolite biosynthesis. In terms of biological role, polyketide transferase; part of the cla gene cluster that produces clavatol and ortho-quinone methide. The clavatol biosynthesis cluster cla and the terrestric acid cluster tra are both involved in the production of peniphenones and penilactones. The non-reducing PKS claF is responsible for the formation of clavatol from successive condensations of 3 malonyl-CoA units, presumably with a simple acetyl-CoA starter unit, and 2 methylation steps. The esterase claE probably collaborates with claF by catalyzing the hydrolysis of ACP-bound acyl intermediates to free the ACP from stalled intermediates. The clavatol oxidase claD then converts clavatol to hydroxyclavatol. Spontaneous dehydration of hydroxyclavatol leads to the accumulation of the highly active ortho-quinone methide. On the other hand, the PKS-NRPS hybrid traA is involved in the formation of crustosic acid, with the help of traB and traD. The polyketide synthase module (PKS) of traA is responsible for the synthesis of the polyketide backbone via the condensation of an acetyl-CoA starter unit with 3 malonyl-CoA units. The downstream nonribosomal peptide synthetase (NRPS) module then amidates the carboxyl end of the polyketide with L-malic acid. Because traA lacks a designated enoylreductase (ER) domain, the required activity is provided the enoyl reductase traG. Crustosic acid undergoes decarboxylation and isomerization to the terrestric acid, catalyzed by the 2-oxoglutarate-dependent dioxygenase traH. Both acids are further converted to the 2 gamma-butyrolactones (R)-5-methyltetronic acid and (S)-5-carboxylmethyltetronic acid, with involvement of the cytochrome P450 monooxygenase claJ. Spontaneous addition of the methide to these gamma-butyrolactones leads to peniphenone D and penilactone D, which undergo again stereospecific attacking by methide to give penilactones A and B. The function of the polyketide transferase claH has not been investigated yet. The sequence is that of Polyketide transferase claH from Penicillium crustosum (Blue mold fungus).